Here is an 876-residue protein sequence, read N- to C-terminus: Alanine--tRNA ligase (876 aa).

4 residues coordinate Zn(2+): His-560, His-564, Cys-662, and His-666.

Belongs to the class-II aminoacyl-tRNA synthetase family. The cofactor is Zn(2+).

It localises to the cytoplasm. The catalysed reaction is tRNA(Ala) + L-alanine + ATP = L-alanyl-tRNA(Ala) + AMP + diphosphate. Catalyzes the attachment of alanine to tRNA(Ala) in a two-step reaction: alanine is first activated by ATP to form Ala-AMP and then transferred to the acceptor end of tRNA(Ala). Also edits incorrectly charged Ser-tRNA(Ala) and Gly-tRNA(Ala) via its editing domain. This Synechococcus sp. (strain ATCC 27144 / PCC 6301 / SAUG 1402/1) (Anacystis nidulans) protein is Alanine--tRNA ligase.